Here is a 281-residue protein sequence, read N- to C-terminus: Phosphatidylglycerol--prolipoprotein diacylglyceryl transferase (281 aa).

7 helical membrane-spanning segments follow: residues 11–31 (IIFT…VISF), 57–77 (LLYS…IIFY), 89–109 (VFYI…AIIV), 121–141 (ILEI…AGRI), 194–214 (PTQL…IYFF), 222–242 (GSIS…IEFF), and 255–275 (IITM…IIMY). Arginine 140 is a binding site for a 1,2-diacyl-sn-glycero-3-phospho-(1'-sn-glycerol).

Belongs to the Lgt family.

Its subcellular location is the cell inner membrane. The enzyme catalyses L-cysteinyl-[prolipoprotein] + a 1,2-diacyl-sn-glycero-3-phospho-(1'-sn-glycerol) = an S-1,2-diacyl-sn-glyceryl-L-cysteinyl-[prolipoprotein] + sn-glycerol 1-phosphate + H(+). It participates in protein modification; lipoprotein biosynthesis (diacylglyceryl transfer). Its function is as follows. Catalyzes the transfer of the diacylglyceryl group from phosphatidylglycerol to the sulfhydryl group of the N-terminal cysteine of a prolipoprotein, the first step in the formation of mature lipoproteins. The sequence is that of Phosphatidylglycerol--prolipoprotein diacylglyceryl transferase from Buchnera aphidicola subsp. Acyrthosiphon pisum (strain 5A).